A 148-amino-acid polypeptide reads, in one-letter code: Deoxyuridine 5'-triphosphate nucleotidohydrolase (148 aa).

Residues 67-69, Asn-80, 84-86, and Met-94 contribute to the substrate site; these read RSG and LID.

This sequence belongs to the dUTPase family. The cofactor is Mg(2+).

The catalysed reaction is dUTP + H2O = dUMP + diphosphate + H(+). The protein operates within pyrimidine metabolism; dUMP biosynthesis; dUMP from dCTP (dUTP route): step 2/2. Functionally, this enzyme is involved in nucleotide metabolism: it produces dUMP, the immediate precursor of thymidine nucleotides and it decreases the intracellular concentration of dUTP so that uracil cannot be incorporated into DNA. In Francisella tularensis subsp. holarctica (strain FTNF002-00 / FTA), this protein is Deoxyuridine 5'-triphosphate nucleotidohydrolase.